We begin with the raw amino-acid sequence, 517 residues long: Splicing factor cactin (517 aa).

The segment covering 1 to 14 (MAFRDSTRDFNRSR) has biased composition (basic and acidic residues). Residues 1-59 (MAFRDSTRDFNRSRPEKRHASRSSSPRSFRPSNQNARANYNLPRVRDAMKEEERSRETK) form a disordered region. Residues 22-32 (RSSSPRSFRPS) show a composition bias toward low complexity. A compositionally biased stretch (basic and acidic residues) spans 44 to 59 (RVRDAMKEEERSRETK).

The protein belongs to the CACTIN family. As to quaternary structure, interacts with sde2. Interacts with cdc5.

In terms of biological role, plays a role in pre-mRNA splicing by facilitating excision of introns featuring long spacing between the branchpoint and 3'-splice site (ss). Recruited to the spliceosome by sde2, which may enable folding of the RNA between the BP and 3'-ss to guide the splice site towards the spliceosome's catalytic center. Assists the splicing of several components involved in chromatin organization. The polypeptide is Splicing factor cactin (Schizosaccharomyces pombe (strain 972 / ATCC 24843) (Fission yeast)).